The primary structure comprises 230 residues: Secretory carrier-associated membrane protein 4 (230 aa).

Topologically, residues 1-39 are cytoplasmic; it reads MAGKENNFPPLPPFLPLKPCFYQDFSDEIPVEHQVLVKR. 4 helical membrane passes run 40–60, 61–81, 106–126, and 149–169; these read IYRL…ACLA, WWIA…LVLF, MTFF…AIGF, and VVML…AVTI. Over 170–230 the chain is Cytoplasmic; the sequence is VKVHRIYRGA…SYSSSGGHWP (61 aa). Thr194 carries the post-translational modification Phosphothreonine.

It belongs to the SCAMP family.

The protein resides in the membrane. In terms of biological role, probably involved in membrane protein trafficking. The protein is Secretory carrier-associated membrane protein 4 (Scamp4) of Mus musculus (Mouse).